The sequence spans 376 residues: Arabinogalactan endo-beta-1,4-galactanase (376 aa).

The N-terminal stretch at 1-17 (MKKKILAATAILLAAIA) is a signal peptide. Glu161 acts as the Proton donor in catalysis. Glu270 serves as the catalytic Nucleophile. Positions 281 and 285 each coordinate Ca(2+).

This sequence belongs to the glycosyl hydrolase 53 family. Requires Ca(2+) as cofactor.

It catalyses the reaction The enzyme specifically hydrolyzes (1-&gt;4)-beta-D-galactosidic linkages in type I arabinogalactans.. This is Arabinogalactan endo-beta-1,4-galactanase (ganB) from Cellvibrio japonicus (strain Ueda107) (Pseudomonas fluorescens subsp. cellulosa).